The following is a 144-amino-acid chain: MSKVQLYGTPMRGGCCGGCECPNCGFKLGGVVAGVLAGGKVSKRRKSVAKKGGIGTKGGAKKSPWVAFLQRYSKEHGVKYSEAMQSPKAKKEYSALKKSGKIHKVGGSKSSGHRKTKKPKKSMKGGSKTKKLSEKQLMKELLAM.

Residues 90-144 (KKEYSALKKSGKIHKVGGSKSSGHRKTKKPKKSMKGGSKTKKLSEKQLMKELLAM) form a disordered region. Positions 98–130 (KSGKIHKVGGSKSSGHRKTKKPKKSMKGGSKTK) are enriched in basic residues.

This is an uncharacterized protein from Sputnik virophage.